We begin with the raw amino-acid sequence, 443 residues long: Glutamyl-tRNA reductase (443 aa).

Substrate-binding positions include 49-52, S109, 114-116, and Q120; these read TCNR and EPQ. C50 acts as the Nucleophile in catalysis. Residue 189–194 participates in NADP(+) binding; the sequence is GAGKMC. Residues 421–443 are disordered; that stretch reads PDSQQTGGDSVEKDADSKQDLTS. Residues 430-443 show a composition bias toward basic and acidic residues; sequence SVEKDADSKQDLTS.

Belongs to the glutamyl-tRNA reductase family. Homodimer.

The catalysed reaction is (S)-4-amino-5-oxopentanoate + tRNA(Glu) + NADP(+) = L-glutamyl-tRNA(Glu) + NADPH + H(+). It participates in porphyrin-containing compound metabolism; protoporphyrin-IX biosynthesis; 5-aminolevulinate from L-glutamyl-tRNA(Glu): step 1/2. In terms of biological role, catalyzes the NADPH-dependent reduction of glutamyl-tRNA(Glu) to glutamate 1-semialdehyde (GSA). The sequence is that of Glutamyl-tRNA reductase from Syntrophotalea carbinolica (strain DSM 2380 / NBRC 103641 / GraBd1) (Pelobacter carbinolicus).